A 38-amino-acid chain; its full sequence is Large ribosomal subunit protein bL36 (38 aa).

It belongs to the bacterial ribosomal protein bL36 family.

The protein is Large ribosomal subunit protein bL36 of Bacteroides fragilis (strain ATCC 25285 / DSM 2151 / CCUG 4856 / JCM 11019 / LMG 10263 / NCTC 9343 / Onslow / VPI 2553 / EN-2).